A 197-amino-acid polypeptide reads, in one-letter code: Putative peptidyl-prolyl cis-trans isomerase (197 aa).

The PPIase cyclophilin-type domain maps to 14–195 (NEIKVVMHTN…YDVVIESIDV (182 aa)).

It belongs to the cyclophilin-type PPIase family.

It carries out the reaction [protein]-peptidylproline (omega=180) = [protein]-peptidylproline (omega=0). Its function is as follows. PPIases accelerate the folding of proteins. It catalyzes the cis-trans isomerization of proline imidic peptide bonds in oligopeptides. In Staphylococcus epidermidis (strain ATCC 35984 / DSM 28319 / BCRC 17069 / CCUG 31568 / BM 3577 / RP62A), this protein is Putative peptidyl-prolyl cis-trans isomerase.